A 229-amino-acid chain; its full sequence is Potassium/proton antiporter CemA (229 aa).

The next 4 helical transmembrane spans lie at F7–L27, I114–L134, I154–I174, and I189–I209.

The protein belongs to the CemA family.

Its subcellular location is the plastid. It is found in the chloroplast inner membrane. It carries out the reaction K(+)(in) + H(+)(out) = K(+)(out) + H(+)(in). In terms of biological role, contributes to K(+)/H(+) antiport activity by supporting proton efflux to control proton extrusion and homeostasis in chloroplasts in a light-dependent manner to modulate photosynthesis. Prevents excessive induction of non-photochemical quenching (NPQ) under continuous-light conditions. Indirectly promotes efficient inorganic carbon uptake into chloroplasts. The chain is Potassium/proton antiporter CemA from Vitis vinifera (Grape).